The sequence spans 486 residues: Phosphomethylpyrimidine synthase (486 aa).

Residues N80, M109, Y139, H175, 195 to 197 (SRG), 236 to 239 (DSLR), and E275 each bind substrate. H279 contacts Zn(2+). Position 329 (Y329) interacts with substrate. H370 is a Zn(2+) binding site. Positions 450, 453, and 458 each coordinate [4Fe-4S] cluster.

This sequence belongs to the ThiC family. [4Fe-4S] cluster serves as cofactor.

The enzyme catalyses 5-amino-1-(5-phospho-beta-D-ribosyl)imidazole + S-adenosyl-L-methionine = 4-amino-2-methyl-5-(phosphooxymethyl)pyrimidine + CO + 5'-deoxyadenosine + formate + L-methionine + 3 H(+). It participates in cofactor biosynthesis; thiamine diphosphate biosynthesis. Functionally, catalyzes the synthesis of the hydroxymethylpyrimidine phosphate (HMP-P) moiety of thiamine from aminoimidazole ribotide (AIR) in a radical S-adenosyl-L-methionine (SAM)-dependent reaction. The chain is Phosphomethylpyrimidine synthase from Trichodesmium erythraeum (strain IMS101).